Reading from the N-terminus, the 1307-residue chain is tRNA(adenine(34)) deaminase, chloroplastic (1307 aa).

The transit peptide at methionine 1–cysteine 55 directs the protein to the chloroplast. 7 disordered regions span residues glutamate 245 to glycine 377, serine 439 to glutamate 458, histidine 544 to serine 563, glutamate 576 to threonine 618, glycine 753 to glycine 807, serine 837 to glycine 957, and leucine 975 to alanine 1073. Residues serine 267–serine 278 show a composition bias toward low complexity. Residues glutamate 280–glutamine 309 are a coiled coil. Over residues phenylalanine 281–valine 292 the composition is skewed to acidic residues. The span at glutamate 293–serine 321 shows a compositional bias: basic and acidic residues. Positions glutamine 367–glycine 377 are enriched in polar residues. A compositionally biased stretch (basic and acidic residues) spans serine 439–arginine 448. Polar residues-rich tracts occupy residues proline 546–serine 563 and glutamine 582–aspartate 591. Composition is skewed to basic and acidic residues over residues serine 592–glycine 615 and glutamate 760–arginine 771. Over residues serine 852 to tryptophan 863 the composition is skewed to polar residues. The span at glycine 866–leucine 883 shows a compositional bias: basic and acidic residues. Polar residues-rich tracts occupy residues valine 895–proline 907, serine 924–glutamine 947, and serine 1045–alanine 1073. Residues threonine 1108–glycine 1230 form the CMP/dCMP-type deaminase domain. Histidine 1159 lines the Zn(2+) pocket. Glutamate 1161 functions as the Proton donor in the catalytic mechanism. Zn(2+) contacts are provided by cysteine 1189 and cysteine 1192. Positions glutamine 1268 to lysine 1293 are disordered.

Belongs to the cytidine and deoxycytidylate deaminase family. In terms of assembly, homodimer. Zn(2+) serves as cofactor.

It is found in the plastid. The protein resides in the chloroplast. It carries out the reaction adenosine(34) in tRNA + H2O + H(+) = inosine(34) in tRNA + NH4(+). Deaminates adenosines to inosines in tRNA-Arg(ACG). Exclusively involved in A-to-I editing of the prokaryote-type chloroplast-tRNA and not involved in C-to-U editing. In Arabidopsis thaliana (Mouse-ear cress), this protein is tRNA(adenine(34)) deaminase, chloroplastic (TADA).